A 540-amino-acid chain; its full sequence is NXPE family member 1 (540 aa).

The N-terminal stretch at 1-22 (MLHKYLKLICLLAAICVLCIIS) is a signal peptide. N-linked (GlcNAc...) asparagine glycosylation is found at Asn24, Asn42, Asn87, Asn155, Asn205, and Asn291.

This sequence belongs to the NXPE family. As to expression, intestine, and to a lesser extent in kidney.

It is found in the secreted. The protein is NXPE family member 1 (NXPE1) of Oryctolagus cuniculus (Rabbit).